The following is a 379-amino-acid chain: Probable 3-phenylpropionic acid transporter (379 aa).

The Cytoplasmic segment spans residues 1–4; sequence MVLQ. The chain crosses the membrane as a helical span at residues 5 to 31; the sequence is STRWLALGYFTYFFSYGIFLPFWSVWL. Residues 32-37 lie on the Periplasmic side of the membrane; the sequence is KGIGLT. Residues 38-66 traverse the membrane as a helical segment; that stretch reads PETIGLLLGAGLVARFLGSLLIAPRVSDP. The Cytoplasmic portion of the chain corresponds to 67–70; it reads SRLI. A helical membrane pass occupies residues 71–96; that stretch reads SALRVLALLTLLFAVAFWAGAHVAWL. Residues 97–100 lie on the Periplasmic side of the membrane; it reads MLVM. Residues 101-118 form a helical membrane-spanning segment; that stretch reads IGFNLFFSPLVPLTDALA. Topologically, residues 119-129 are cytoplasmic; sequence NTWQKQFPLDY. A helical membrane pass occupies residues 130 to 152; it reads GKVRLWGSVAFVIGSALTGKLVT. The Periplasmic portion of the chain corresponds to 153-155; sequence MFD. Residues 156-175 traverse the membrane as a helical segment; the sequence is YRVILALLTLGVASMLLGFL. The Cytoplasmic segment spans residues 176–207; it reads IRPTIQPQGASRQQESTGWSAWLALVRQNWRF. Residues 208–227 traverse the membrane as a helical segment; sequence LACVCLLQGAHAAYYGFSAI. Over 228–231 the chain is Periplasmic; sequence YWQA. A helical transmembrane segment spans residues 232 to 256; the sequence is AGYSASAVGYLWSLGVVAEVIIFAL. Residues 257 to 266 lie on the Cytoplasmic side of the membrane; it reads SNKLFRRCSA. Residues 267–286 traverse the membrane as a helical segment; the sequence is RDMLLISAICGVVRWGIMGA. The Periplasmic portion of the chain corresponds to 287 to 289; that stretch reads TTA. A helical membrane pass occupies residues 290-312; the sequence is LPWLIVVQILHCGTFTVCHLAAM. The Cytoplasmic segment spans residues 313–323; sequence RYIAARQGSEV. A helical membrane pass occupies residues 324-351; sequence IRLQAVYSAVAMGGSIAIMTVFAGFLYQ. At 352 to 354 the chain is on the periplasmic side; sequence YLG. The helical transmembrane segment at 355–375 threads the bilayer; sequence HGVFWVMALVALPAMFLRPKV. Topologically, residues 376-379 are cytoplasmic; the sequence is VPSC.

Belongs to the major facilitator superfamily. Phenyl propionate permease (PPP) (TC 2.A.1.27) family.

The protein localises to the cell inner membrane. In terms of biological role, probable permease involved in the uptake of 3-phenylpropionic acid. In Escherichia coli (strain K12), this protein is Probable 3-phenylpropionic acid transporter (hcaT).